A 313-amino-acid chain; its full sequence is Aspartate carbamoyltransferase catalytic subunit (313 aa).

Carbamoyl phosphate-binding residues include Arg53 and Thr54. Residue Lys82 coordinates L-aspartate. Positions 103, 131, and 134 each coordinate carbamoyl phosphate. L-aspartate is bound by residues Arg163 and Arg224. The carbamoyl phosphate site is built by Leu263 and Pro264.

Belongs to the aspartate/ornithine carbamoyltransferase superfamily. ATCase family. Heterooligomer of catalytic and regulatory chains.

It carries out the reaction carbamoyl phosphate + L-aspartate = N-carbamoyl-L-aspartate + phosphate + H(+). The protein operates within pyrimidine metabolism; UMP biosynthesis via de novo pathway; (S)-dihydroorotate from bicarbonate: step 2/3. In terms of biological role, catalyzes the condensation of carbamoyl phosphate and aspartate to form carbamoyl aspartate and inorganic phosphate, the committed step in the de novo pyrimidine nucleotide biosynthesis pathway. The polypeptide is Aspartate carbamoyltransferase catalytic subunit (Halorubrum lacusprofundi (strain ATCC 49239 / DSM 5036 / JCM 8891 / ACAM 34)).